A 240-amino-acid polypeptide reads, in one-letter code: Purine nucleoside phosphorylase RP494 (240 aa).

Positions 60, 96, and 113 each coordinate Zn(2+).

It belongs to the purine nucleoside phosphorylase YfiH/LACC1 family. As to quaternary structure, homodimer. Cu(2+) is required as a cofactor. Requires Zn(2+) as cofactor.

It carries out the reaction adenosine + phosphate = alpha-D-ribose 1-phosphate + adenine. The enzyme catalyses S-methyl-5'-thioadenosine + phosphate = 5-(methylsulfanyl)-alpha-D-ribose 1-phosphate + adenine. The catalysed reaction is inosine + phosphate = alpha-D-ribose 1-phosphate + hypoxanthine. It catalyses the reaction adenosine + H2O + H(+) = inosine + NH4(+). Purine nucleoside enzyme that catalyzes the phosphorolysis of adenosine and inosine nucleosides, yielding D-ribose 1-phosphate and the respective free bases, adenine and hypoxanthine. Also catalyzes the phosphorolysis of S-methyl-5'-thioadenosine into adenine and S-methyl-5-thio-alpha-D-ribose 1-phosphate. Also has adenosine deaminase activity. In Rickettsia prowazekii (strain Madrid E), this protein is Purine nucleoside phosphorylase RP494.